The chain runs to 158 residues: NADH-quinone oxidoreductase subunit B (158 aa).

The [4Fe-4S] cluster site is built by Cys-37, Cys-38, Cys-102, and Cys-132.

Belongs to the complex I 20 kDa subunit family. NDH-1 is composed of 14 different subunits. Subunits NuoB, C, D, E, F, and G constitute the peripheral sector of the complex. Requires [4Fe-4S] cluster as cofactor.

The protein localises to the cell inner membrane. It catalyses the reaction a quinone + NADH + 5 H(+)(in) = a quinol + NAD(+) + 4 H(+)(out). NDH-1 shuttles electrons from NADH, via FMN and iron-sulfur (Fe-S) centers, to quinones in the respiratory chain. Couples the redox reaction to proton translocation (for every two electrons transferred, four hydrogen ions are translocated across the cytoplasmic membrane), and thus conserves the redox energy in a proton gradient. In Legionella pneumophila (strain Paris), this protein is NADH-quinone oxidoreductase subunit B.